The primary structure comprises 844 residues: Protein translocase subunit SecA 1 (844 aa).

Residues Gln-91, 109-113 (GEGKT), and Asp-498 each bind ATP. The span at 793–813 (KSKSFGEAKHVTAEDGKEKAK) shows a compositional bias: basic and acidic residues. The disordered stretch occupies residues 793–825 (KSKSFGEAKHVTAEDGKEKAKPQPIVKGDQVGR). Residues Cys-829, Cys-831, Cys-840, and His-841 each contribute to the Zn(2+) site.

This sequence belongs to the SecA family. Monomer and homodimer. Part of the essential Sec protein translocation apparatus which comprises SecA, SecYEG and auxiliary proteins SecDF. Other proteins may also be involved. It depends on Zn(2+) as a cofactor.

It localises to the cell membrane. The protein resides in the cytoplasm. The enzyme catalyses ATP + H2O + cellular proteinSide 1 = ADP + phosphate + cellular proteinSide 2.. Part of the Sec protein translocase complex. Interacts with the SecYEG preprotein conducting channel. Has a central role in coupling the hydrolysis of ATP to the transfer of proteins into and across the cell membrane, serving as an ATP-driven molecular motor driving the stepwise translocation of polypeptide chains across the membrane. This is Protein translocase subunit SecA 1 from Staphylococcus epidermidis (strain ATCC 35984 / DSM 28319 / BCRC 17069 / CCUG 31568 / BM 3577 / RP62A).